Reading from the N-terminus, the 660-residue chain is Poly [ADP-ribose] polymerase 2-A (660 aa).

An SAP 1 domain is found at 2–36 (SARLRVEELRAELQRRGLDASGNKPVLVRRLDAAI). The interval 40-92 (EEEEAAVSAAAKEEADAGGVVDGEGNGEDKRKRKRRGDGEDVDNSESDAAKLE) is disordered. A Nuclear localization signal motif is present at residues 69-75 (KRKRKRR). The region spanning 91 to 125 (LEGMSYRELQALAKSRGLAANGSKKEVIERLLCAP) is the SAP 2 domain. In terms of domain architecture, WGR spans 179–281 (TYHVLQVWFL…KSFECYARKY (103 aa)). In terms of domain architecture, PARP alpha-helical spans 308 to 426 (ETKLETRIAS…EIEIATKLLE (119 aa)). The PARP catalytic domain maps to 434-660 (DPLYARYKQL…LHVSFNFKKR (227 aa)).

Belongs to the ARTD/PARP family.

It localises to the nucleus. It carries out the reaction NAD(+) + (ADP-D-ribosyl)n-acceptor = nicotinamide + (ADP-D-ribosyl)n+1-acceptor + H(+).. The enzyme catalyses L-aspartyl-[protein] + NAD(+) = 4-O-(ADP-D-ribosyl)-L-aspartyl-[protein] + nicotinamide. The catalysed reaction is L-glutamyl-[protein] + NAD(+) = 5-O-(ADP-D-ribosyl)-L-glutamyl-[protein] + nicotinamide. In terms of biological role, involved in the base excision repair (BER) pathway, by catalyzing the poly(ADP-ribosyl)ation of a limited number of acceptor proteins involved in chromatin architecture and in DNA metabolism. This modification follows DNA damages and appears as an obligatory step in a detection/signaling pathway leading to the reparation of DNA strand breaks. In Oryza sativa subsp. japonica (Rice), this protein is Poly [ADP-ribose] polymerase 2-A (PARP2-A).